The following is a 111-amino-acid chain: uncharacterized protein (111 aa).

This is an uncharacterized protein from Saccharomyces cerevisiae (strain ATCC 204508 / S288c) (Baker's yeast).